Here is a 66-residue protein sequence, read N- to C-terminus: Beta-defensin 107A (66 aa).

An N-terminal signal peptide occupies residues 1-22; that stretch reads MKIFFFIFAALFLLAQIFQART. 2 cysteine pairs are disulfide-bonded: Cys37–Cys51 and Cys41–Cys60.

The protein belongs to the beta-defensin family.

It localises to the secreted. Functionally, has antibacterial activity. The sequence is that of Beta-defensin 107A (DEFB107A) from Gorilla gorilla gorilla (Western lowland gorilla).